The following is an 884-amino-acid chain: Valine--tRNA ligase (884 aa).

A 'HIGH' region motif is present at residues 46–56 (PNVTGKLHLGH). A 'KMSKS' region motif is present at residues 520-524 (KMSKS). ATP is bound at residue lysine 523. A coiled-coil region spans residues 809-844 (LADLLNVEEELARLEKELAKWQKELNMVGKKLSNER).

Belongs to the class-I aminoacyl-tRNA synthetase family. ValS type 1 subfamily. In terms of assembly, monomer.

It is found in the cytoplasm. The catalysed reaction is tRNA(Val) + L-valine + ATP = L-valyl-tRNA(Val) + AMP + diphosphate. Functionally, catalyzes the attachment of valine to tRNA(Val). As ValRS can inadvertently accommodate and process structurally similar amino acids such as threonine, to avoid such errors, it has a 'posttransfer' editing activity that hydrolyzes mischarged Thr-tRNA(Val) in a tRNA-dependent manner. The polypeptide is Valine--tRNA ligase (Streptococcus agalactiae serotype Ia (strain ATCC 27591 / A909 / CDC SS700)).